A 156-amino-acid polypeptide reads, in one-letter code: 6,7-dimethyl-8-ribityllumazine synthase (156 aa).

5-amino-6-(D-ribitylamino)uracil-binding positions include phenylalanine 25, 59 to 61 (AFE), and 83 to 85 (AVI). Position 88-89 (88-89 (AT)) interacts with (2S)-2-hydroxy-3-oxobutyl phosphate. Histidine 91 functions as the Proton donor in the catalytic mechanism. Phenylalanine 116 lines the 5-amino-6-(D-ribitylamino)uracil pocket. Arginine 130 contacts (2S)-2-hydroxy-3-oxobutyl phosphate.

It belongs to the DMRL synthase family.

It carries out the reaction (2S)-2-hydroxy-3-oxobutyl phosphate + 5-amino-6-(D-ribitylamino)uracil = 6,7-dimethyl-8-(1-D-ribityl)lumazine + phosphate + 2 H2O + H(+). The protein operates within cofactor biosynthesis; riboflavin biosynthesis; riboflavin from 2-hydroxy-3-oxobutyl phosphate and 5-amino-6-(D-ribitylamino)uracil: step 1/2. In terms of biological role, catalyzes the formation of 6,7-dimethyl-8-ribityllumazine by condensation of 5-amino-6-(D-ribitylamino)uracil with 3,4-dihydroxy-2-butanone 4-phosphate. This is the penultimate step in the biosynthesis of riboflavin. The polypeptide is 6,7-dimethyl-8-ribityllumazine synthase (Nitratidesulfovibrio vulgaris (strain ATCC 29579 / DSM 644 / CCUG 34227 / NCIMB 8303 / VKM B-1760 / Hildenborough) (Desulfovibrio vulgaris)).